A 555-amino-acid polypeptide reads, in one-letter code: Cinnamate beta-D-glucosyltransferase (555 aa).

Histidine 19 functions as the Proton acceptor in the catalytic mechanism. Histidine 19 provides a ligand contact to an anthocyanidin. UDP-alpha-D-glucose is bound by residues glutamine 344, histidine 359, tryptophan 362, asparagine 363, serine 364, and glutamate 367. An an anthocyanidin-binding site is contributed by glycine 382. Residues aspartate 383 and glutamine 384 each contribute to the UDP-alpha-D-glucose site.

Belongs to the UDP-glycosyltransferase family. In terms of tissue distribution, highest expression detected in fruit, with lower levels detected in flower and petiole. Barely detectable in leaf and root.

The catalysed reaction is (E)-cinnamate + UDP-alpha-D-glucose = 1-O-(trans-cinnamoyl)-beta-D-glucose + UDP. Functionally, broad spectrum multifunctional glucosyltransferase. Catalyzes the formation of cinnamic acid and p-coumaric acid glucose esters during fruit ripening. Accepted substrates range from derivatives of cinnamic acid and benzoic acid to heterocyclic and aliphatic compounds, resulting in the formation of O- and S-glucose esters and O-glucosides. May also be involved in detoxification of xenobiotics. The polypeptide is Cinnamate beta-D-glucosyltransferase (Fragaria ananassa (Strawberry)).